Reading from the N-terminus, the 792-residue chain is MHVIKRDGRQERVMFDKITSRIQKLCYGLNMDFVDPAQITMKVIQGLYSGVTTVELDTLAAETAATLTTKHPDYAILAARIAVSNLHKEAKKVFSDVMEDLYNYINPHNGKHSPMVAKSTLDIVLANKDRLNSAIIYDRDFSYNYFGFKTLERSYLLKINGKVAERPQHMLMRVSVGIHKEDIDAAIETYNLLSERWFTHASPTLFNAGTNRPQLSSCFLLSMKDDSIEGIYDTLKQCALISKSAGGIGVAVSCIRATGSYIAGTNGNSNGLVPMLRVYNNTARYVDQGGNKRPGAFAIYLEPWHLDIFEFLDLKKNTGKEEQRARDLFFALWIPDLFMKRVETNQDWSLMCPNECPGLDEVWGEEFEKLYASYEKQGRVRKVVKAQQLWYAIIESQTETGTPYMLYKDSCNRKSNQQNLGTIKCSSLCTEIVEYTSKDEVAVCNLASLALNMYVTSEHTYDFKKLAEVTKVVVRNLNKIIDINYYPVPEACLSNKRHRPIGIGVQGLADAFILMRYPFESAEAQLLNKQIFETIYYGALEASCDLAKEQGPYETYEGSPVSKGILQYDMWNVTPTDLWDWKLLKEKIAKYGIRNSLLIAPMPTASTAQILGNNESIEPYTSNIYTRRVLSGEFQIVNPHLLKDLTERGLWHEEMKNQIIACNGSIQSIPEIPDDLKQLYKTVWEISQKTVLKMAAERGAFIDQSQSLNIHIAEPNYGKLTSMHFYGWKQGLKTGMYYLRTRPAANPIQFTLNKEKLKDKEKVSKEEEEKERNTAAMVCSLENRDECLMCGS.

Residues Met-1–Lys-92 enclose the ATP-cone domain. ATP is bound by residues Lys-5–Arg-6, Glu-11–Lys-17, Thr-53, and Asp-57. Lys-17 carries the post-translational modification N6-acetyllysine. GDP contacts are provided by Ser-202 and Ser-217. Residues Cys-218 and Cys-444 are joined by a disulfide bond. DTTP is bound by residues Asp-226–Ile-228, Lys-243, Arg-256, and Ala-263–Gly-264. Lys-376 is modified (N6-acetyllysine). The active-site Proton acceptor is the Ser-427. Catalysis depends on Cys-429, which acts as the Cysteine radical intermediate. GDP-binding positions include Glu-431 and Thr-604–Thr-607. Glu-431 serves as the catalytic Proton acceptor. Thr-751 carries the post-translational modification Phosphothreonine.

The protein belongs to the ribonucleoside diphosphate reductase large chain family. Heterodimer of a large and a small subunit. Interacts with RRM2B. Interacts with AHCYL1 which inhibits its activity.

It is found in the cytoplasm. The enzyme catalyses a 2'-deoxyribonucleoside 5'-diphosphate + [thioredoxin]-disulfide + H2O = a ribonucleoside 5'-diphosphate + [thioredoxin]-dithiol. Its activity is regulated as follows. Under complex allosteric control mediated by deoxynucleoside triphosphates and ATP binding to separate specificity and activation sites on the M1 subunit. The type of nucleotide bound at the specificity site determines substrate preference. It seems probable that ATP makes the enzyme reduce CDP and UDP, dGTP favors ADP reduction and dTTP favors GDP reduction. Stimulated by ATP and inhibited by dATP binding to the activity site, the dATP inhibition is mediated by AHCYL1 which stabilizes dATP in the site. Provides the precursors necessary for DNA synthesis. Catalyzes the biosynthesis of deoxyribonucleotides from the corresponding ribonucleotides. The protein is Ribonucleoside-diphosphate reductase large subunit (RRM1) of Pongo abelii (Sumatran orangutan).